The chain runs to 1017 residues: Pikachurin (1017 aa).

Residues 1 to 24 (MDLIRGVLLRLLLLASSLGPGAVS) form the signal peptide. 2 consecutive Fibronectin type-III domains span residues 37-136 (PPLD…TLSQ) and 144-239 (APQQ…TLCP). A glycan (N-linked (GlcNAc...) asparagine) is linked at N47. An EGF-like 1 domain is found at 343–381 (FDMPCDETLCSADSFCVNDYTWGGSRCQCTLGKGGESCS). 11 disulfides stabilise this stretch: C347-C358, C352-C369, C371-C380, C534-C564, C569-C580, C574-C590, C592-C601, C788-C799, C793-C808, C810-C819, and C987-C1014. The region spanning 386 to 564 (IQYPQFFGHS…ALSGADVGEC (179 aa)) is the Laminin G-like 1 domain. EGF-like domains follow at residues 565–602 (SSGI…RHCE) and 784–820 (AAHP…LHCQ). Residues 609–788 (IPQFRESLRS…VNVENAAHPC (180 aa)) enclose the Laminin G-like 2 domain. Residues 835–1014 (IEIPQFIGRS…AVDGKNINTC (180 aa)) form the Laminin G-like 3 domain.

Interacts with DAG1 alpha-dystroglycan. Interacts with GPR158 and GPR179; transsynaptic interaction is required for synaptic organization of photoreceptor cells. In terms of processing, O-glycosylated; contains chondroitin sulfate and heparan sulfate.

Its subcellular location is the secreted. It localises to the extracellular space. It is found in the extracellular matrix. The protein localises to the synaptic cleft. The protein resides in the presynaptic active zone. Functionally, involved in both the retinal photoreceptor ribbon synapse formation and physiological functions of visual perception. Plays a key role in the synaptic organization of photoreceptors by mediating transsynaptic interaction between alpha-dystroglycan and GPR179 on the postsynaptic membrane. Necessary for proper bipolar dendritic tip apposition to the photoreceptor ribbon synapse. Promotes matrix assembly and cell adhesiveness. The sequence is that of Pikachurin (EGFLAM) from Homo sapiens (Human).